Reading from the N-terminus, the 253-residue chain is MAILEATNIHKSYGTKLNKQEVLKGIDIRVEKGEFVSIMGASGSGKTTLLNVLSSIDKLSNGSIKIEGSEMTRLKEKELAQFRKKHLGFIFQEYNLLDTLTVKENILLPLSITKIPRKAADEKFKQVATELGIYEIKDKYPNEISGGQKQRASAARAFIHEPSIIFADEPTGALDSKSASDLLGKLQQLNEKLRATIVMVTHDPVAASYCSRVIFIKDGQIYTQLHKGDESRQTFFKDIMKTQGVLGGVQNDH.

Residues 4-243 (LEATNIHKSY…TFFKDIMKTQ (240 aa)) form the ABC transporter domain. Residue 40-47 (GASGSGKT) participates in ATP binding.

This sequence belongs to the ABC transporter superfamily. As to quaternary structure, the complex is composed of two ATP-binding proteins (BceA) and two transmembrane proteins (BceB).

Part of the ABC transporter complex BceAB (TC 3.A.1.123.5) involved in bacitracin export. Responsible for energy coupling to the transport system. In Halalkalibacterium halodurans (strain ATCC BAA-125 / DSM 18197 / FERM 7344 / JCM 9153 / C-125) (Bacillus halodurans), this protein is Bacitracin export ATP-binding protein BceA (bceA).